The chain runs to 358 residues: Trans-enoyl reductase milB (358 aa).

NADP(+) contacts are provided by residues 48-51 (VDTK), 170-173 (ATAT), 193-196 (SAKH), Tyr211, 258-259 (LD), and 349-350 (VR).

This sequence belongs to the zinc-containing alcohol dehydrogenase family. Monomer.

The catalysed reaction is 10 malonyl-CoA + acetyl-CoA + 3 AH2 + 8 NADPH + 18 H(+) = cordypyrone A + 3 A + 10 CO2 + 8 NADP(+) + 11 CoA + 8 H2O. The protein operates within secondary metabolite biosynthesis. Trans-enoyl reductase; part of the gene cluster that mediates the biosynthesis of cordypyrones A and B, 2 pyrones that show modest activities against pathogenic bacteria including methicillin-resistant Staphylococcus aureus (MRSA), Mycobacterium tuberculosis and Bacillus cereus. The HR-PKS milA catalyzes the formation of cordypyrones A via condensation of one acetate with 10 malonate units. Since milA lacks an enoyl reductase domain, the 2 beta-keto processing domains DH and KR of milA collaborate with the trans-enoyl reductase milB to catalyze the different levels of reduction. The cytochrome P450 monooxygenase milC then hydroxylates the C-22 of cordypyrones A to yield cordypyrones B. The protein is Trans-enoyl reductase milB of Cordyceps militaris (strain CM01) (Caterpillar fungus).